The chain runs to 200 residues: Large ribosomal subunit protein uL4 (200 aa).

Positions 42–65 (TRAQKTRSEVSGGGAKPWRQKGTG) are disordered.

The protein belongs to the universal ribosomal protein uL4 family. Part of the 50S ribosomal subunit.

One of the primary rRNA binding proteins, this protein initially binds near the 5'-end of the 23S rRNA. It is important during the early stages of 50S assembly. It makes multiple contacts with different domains of the 23S rRNA in the assembled 50S subunit and ribosome. Functionally, forms part of the polypeptide exit tunnel. This Vibrio cholerae serotype O1 (strain ATCC 39541 / Classical Ogawa 395 / O395) protein is Large ribosomal subunit protein uL4.